A 230-amino-acid polypeptide reads, in one-letter code: Large ribosomal subunit protein uL1c (230 aa).

Belongs to the universal ribosomal protein uL1 family. Part of the 50S ribosomal subunit.

Its subcellular location is the plastid. It is found in the chloroplast. Its function is as follows. Binds directly to 23S rRNA. Might be involved in E site tRNA release (Potential). This Phaeodactylum tricornutum (strain CCAP 1055/1) protein is Large ribosomal subunit protein uL1c (rpl1).